The primary structure comprises 246 residues: Aquaporin AqpM (246 aa).

Topologically, residues 1–11 are cytoplasmic; the sequence is MVSLTKRCIAE. The helical transmembrane segment at 12 to 32 threads the bilayer; the sequence is FIGTFFLVFFGAGAAAITLMI. The Extracellular segment spans residues 33-45; sequence ASGGTAPNPFNIG. Residues 46–66 traverse the membrane as a helical segment; sequence IGLLGGLGDWVAIGLAFGFAI. Topologically, residues 67–69 are cytoplasmic; that stretch reads AAS. A helical transmembrane segment spans residues 70 to 90; that stretch reads IYALGNISGCHINPAVTIGLW. The short motif at 82 to 84 is the NPA 1 element; the sequence is NPA. Residues 91–103 are Extracellular-facing; the sequence is SVKKFPGRDVVPY. The helical transmembrane segment at 104-124 threads the bilayer; that stretch reads IIAQLLGAAFASFIFLQCAGI. At 125–145 the chain is on the cytoplasmic side; it reads TAATIGGLGATAPFPGIGYWQ. Residues 146–166 traverse the membrane as a helical segment; that stretch reads AMLAETVGTFLLMITIMGIAV. The Extracellular portion of the chain corresponds to 167-172; that stretch reads DERAPK. Residues 173 to 193 traverse the membrane as a helical segment; that stretch reads GFAGIIIGLTVAGIITTIGNI. Topologically, residues 194-217 are cytoplasmic; the sequence is TGSSLNPARTFGPYLNDMVFAGTN. The NPA 2 signature appears at 199 to 201; the sequence is NPA. A helical transmembrane segment spans residues 218 to 238; sequence LWNYFPIYVIGPVVGAVLAAL. Topologically, residues 239 to 246 are extracellular; that stretch reads TYQYLTSE.

This sequence belongs to the MIP/aquaporin (TC 1.A.8) family. In terms of assembly, homotetramer.

It is found in the cell membrane. Its function is as follows. Channel that permits osmotically driven movement of water in both directions. It mediates rapid entry or exit of water in response to abrupt changes in osmolarity. Also exhibits a transient but reproducible increase in the initial glycerol flux. This chain is Aquaporin AqpM (aqpM), found in Methanothermobacter thermautotrophicus (strain ATCC 29096 / DSM 1053 / JCM 10044 / NBRC 100330 / Delta H) (Methanobacterium thermoautotrophicum).